The chain runs to 340 residues: Cathepsin B (340 aa).

The signal sequence occupies residues 1 to 17; that stretch reads MSWSRSILCLLGAFANA. Residues 18–79 constitute a propeptide, activation peptide; sequence RSIPYYPPLS…ERVDFAEDMD (62 aa). A glycan (N-linked (GlcNAc...) asparagine) is linked at Asn-38. 6 cysteine pairs are disulfide-bonded: Cys-93–Cys-122, Cys-105–Cys-150, Cys-141–Cys-208, Cys-142–Cys-146, Cys-179–Cys-212, and Cys-187–Cys-198. The active site involves Cys-108. The N-linked (GlcNAc...) asparagine glycan is linked to Asn-192. Active-site residues include His-279 and Asn-299.

Belongs to the peptidase C1 family. In terms of assembly, dimer of a heavy chain and a light chain cross-linked by a disulfide bond.

It is found in the lysosome. It carries out the reaction Hydrolysis of proteins with broad specificity for peptide bonds. Preferentially cleaves -Arg-Arg-|-Xaa bonds in small molecule substrates (thus differing from cathepsin L). In addition to being an endopeptidase, shows peptidyl-dipeptidase activity, liberating C-terminal dipeptides.. In terms of biological role, thiol protease which is believed to participate in intracellular degradation and turnover of proteins. Has also been implicated in tumor invasion and metastasis. In Gallus gallus (Chicken), this protein is Cathepsin B (CTSB).